Consider the following 76-residue polypeptide: MCVQTRMLVAVAVVLVVLAVLSDPVSAGYRKPPFNGSIFGKRAGGDSLYEPGKALASACQVAVEACAAWFPGPEKK.

An N-terminal signal peptide occupies residues 1-27 (MCVQTRMLVAVAVVLVVLAVLSDPVSA). Residue F39 is modified to Phenylalanine amide.

Belongs to the FARP (FMRFamide related peptide) family. As to expression, olfactory lobe and accessory lobe, olfactory globular tract, olfactory lobe cells (at protein level). Widely distributed throughout nervous system.

The protein resides in the secreted. Functionally, GYRKPPFNGSIF-amide may be involved in olfaction and contraction of hindgut. The polypeptide is FMRFamide-related neuropeptides (Procambarus clarkii (Red swamp crayfish)).